Reading from the N-terminus, the 87-residue chain is Small archaeal modifier protein 1 (87 aa).

Gly87 carries the post-translational modification 1-thioglycine; alternate. Gly87 carries the post-translational modification Glycyl adenylate; alternate. Gly87 is covalently cross-linked (Glycyl lysine isopeptide (Gly-Lys) (interchain with K-? in acceptor proteins); alternate).

The C-terminal glycine is likely acyl-adenylated (-COAMP) by UbaA, and also probably thiocarboxylated (-COSH) to function in sulfur transfer.

Functions as a protein modifier covalently attached to lysine residues of substrate proteins, as well as a sulfur carrier in molybdenum cofactor (MoCo) biosynthesis. The protein modification process is termed sampylation and involves the formation of an isopeptide bond between the SAMP1 C-terminal glycine carboxylate and the epsilon-amino group of lysine residues on target proteins. May serve as a proteolytic signal in the cell to target proteins for degradation by proteasomes. This is Small archaeal modifier protein 1 (samp1) from Haloferax volcanii (strain ATCC 29605 / DSM 3757 / JCM 8879 / NBRC 14742 / NCIMB 2012 / VKM B-1768 / DS2) (Halobacterium volcanii).